The following is a 102-amino-acid chain: Small ribosomal subunit protein uS10 (102 aa).

It belongs to the universal ribosomal protein uS10 family. As to quaternary structure, part of the 30S ribosomal subunit.

In terms of biological role, involved in the binding of tRNA to the ribosomes. In Levilactobacillus brevis (strain ATCC 367 / BCRC 12310 / CIP 105137 / JCM 1170 / LMG 11437 / NCIMB 947 / NCTC 947) (Lactobacillus brevis), this protein is Small ribosomal subunit protein uS10.